Reading from the N-terminus, the 183-residue chain is U3 small nucleolar ribonucleoprotein protein IMP3 (183 aa).

An S4 RNA-binding domain is found at 109–175 (RRLPVIMHRL…IKKTLLRYRN (67 aa)).

The protein belongs to the universal ribosomal protein uS4 family. Component of a heterotrimeric complex containing IMP3, IMP4 and MPP10. Interacts with MPP10. Component of the ribosomal small subunit (SSU) processome composed of at least 40 protein subunits and snoRNA U3.

The protein resides in the nucleus. It localises to the nucleolus. Its function is as follows. Required for the early cleavages at sites A0, A1 and A2 during 18S ribosomal pre-RNA processing. This Saccharomyces cerevisiae (strain ATCC 204508 / S288c) (Baker's yeast) protein is U3 small nucleolar ribonucleoprotein protein IMP3 (IMP3).